A 230-amino-acid chain; its full sequence is Cytidylate kinase (230 aa).

12–20 (GPSGAGKGT) lines the ATP pocket.

It belongs to the cytidylate kinase family. Type 1 subfamily.

The protein resides in the cytoplasm. It carries out the reaction CMP + ATP = CDP + ADP. The enzyme catalyses dCMP + ATP = dCDP + ADP. The chain is Cytidylate kinase from Shewanella oneidensis (strain ATCC 700550 / JCM 31522 / CIP 106686 / LMG 19005 / NCIMB 14063 / MR-1).